Here is a 319-residue protein sequence, read N- to C-terminus: MCSLPVPREPLRRVAVTGGTHGNEMSGVYLARHWLHAPAELQRASFSAVPVLANPAATSGCRRYVDHDLNRTFTSSFLNSRPTPDDPYEVTRARELNQLLGPKASGQAFDFVLDLHNTTANMGTCLIAKSSHEVFAMHLCRHLQLQYPELSCQVFLYQRSGEESYNLDSVAKNGLGLELGPQPQGVLRADIFSRMRTLVATVLDFIELFNQGTAFPAFEMEAYRPVGVVDFPRTEAGHLAGTVHPQLQDRDFQPLQPGAPIFQMFSGEDLLYEGESTVYPVFINEAAYYEKGVAFVQTEKFTFTVPAMPALTPAPSPAS.

Positions 1-210 are hydrolytic domain; that stretch reads MCSLPVPREP…TVLDFIELFN (210 aa). The Zn(2+) site is built by H21 and E24. Substrate contacts are provided by residues R63 and 70 to 71; that span reads NR. Residue H116 participates in Zn(2+) binding. Residues E178 and Y288 each contribute to the substrate site. Positions 211–318 are shielding domain; that stretch reads QGTAFPAFEM…PALTPAPSPA (108 aa).

It belongs to the AspA/AstE family. Aspartoacylase subfamily. Exists as a mixture of homodimers and homotetramer, both catalytically active. As to quaternary structure, (Microbial infection) Interacts with hepatitis C virus/HCV core protein. It depends on Zn(2+) as a cofactor.

Its subcellular location is the apical cell membrane. The protein localises to the cytoplasm. It carries out the reaction an N-acyl-aromatic L-alpha-amino acid + H2O = an aromatic L-alpha-amino acid + a carboxylate. The enzyme catalyses an N-acetyl-L-cysteine-S-conjugate + H2O = an S-substituted L-cysteine + acetate. Plays an important role in deacetylating mercapturic acids in kidney proximal tubules. Also acts on N-acetyl-aromatic amino acids. The polypeptide is N-acyl-aromatic-L-amino acid amidohydrolase (carboxylate-forming) (ACY3) (Homo sapiens (Human)).